Reading from the N-terminus, the 345-residue chain is Eukaryotic translation initiation factor 3 subunit F (345 aa).

An MPN domain is found at 30-166; that stretch reads VVIHPQALFS…TRAYISAPVG (137 aa). The disordered stretch occupies residues 308-345; sequence GGESGNAESGQRGGQRGGKGGRGGQQRTQDRSGEEARA. Residues 318–331 show a composition bias toward gly residues; that stretch reads QRGGQRGGKGGRGG. Positions 335-345 are enriched in basic and acidic residues; sequence TQDRSGEEARA.

The protein belongs to the eIF-3 subunit F family. In terms of assembly, component of the eukaryotic translation initiation factor 3 (eIF-3) complex.

It localises to the cytoplasm. Component of the eukaryotic translation initiation factor 3 (eIF-3) complex, which is involved in protein synthesis of a specialized repertoire of mRNAs and, together with other initiation factors, stimulates binding of mRNA and methionyl-tRNAi to the 40S ribosome. The eIF-3 complex specifically targets and initiates translation of a subset of mRNAs involved in cell proliferation. This Aspergillus oryzae (strain ATCC 42149 / RIB 40) (Yellow koji mold) protein is Eukaryotic translation initiation factor 3 subunit F.